Here is a 598-residue protein sequence, read N- to C-terminus: Aspartate--tRNA(Asp/Asn) ligase (598 aa).

Glu-173 is an L-aspartate binding site. Residues Gln-197–Lys-200 form an aspartate region. Arg-219 contributes to the L-aspartate binding site. Residues Arg-219–Glu-221 and Gln-228 each bind ATP. His-448 contacts L-aspartate. Glu-482 is an ATP binding site. Position 489 (Arg-489) interacts with L-aspartate. Gly-534–Arg-537 is a binding site for ATP. Positions Gly-560–Ala-598 are disordered. Residues Gln-575 to Ala-591 are compositionally biased toward basic and acidic residues.

Belongs to the class-II aminoacyl-tRNA synthetase family. Type 1 subfamily. Homodimer.

It is found in the cytoplasm. The enzyme catalyses tRNA(Asx) + L-aspartate + ATP = L-aspartyl-tRNA(Asx) + AMP + diphosphate. Its function is as follows. Aspartyl-tRNA synthetase with relaxed tRNA specificity since it is able to aspartylate not only its cognate tRNA(Asp) but also tRNA(Asn). Reaction proceeds in two steps: L-aspartate is first activated by ATP to form Asp-AMP and then transferred to the acceptor end of tRNA(Asp/Asn). The polypeptide is Aspartate--tRNA(Asp/Asn) ligase (Kineococcus radiotolerans (strain ATCC BAA-149 / DSM 14245 / SRS30216)).